The sequence spans 64 residues: DNA gyrase inhibitor YacG (64 aa).

Zn(2+)-binding residues include Cys7, Cys10, Cys26, and Cys30. Positions 43–64 (KRIPGPINPDLLPYPDEGEQWQ) are disordered.

This sequence belongs to the DNA gyrase inhibitor YacG family. In terms of assembly, interacts with GyrB. Zn(2+) is required as a cofactor.

Functionally, inhibits all the catalytic activities of DNA gyrase by preventing its interaction with DNA. Acts by binding directly to the C-terminal domain of GyrB, which probably disrupts DNA binding by the gyrase. The sequence is that of DNA gyrase inhibitor YacG from Aeromonas salmonicida (strain A449).